A 400-amino-acid chain; its full sequence is Large envelope protein (400 aa).

The residue at position 1 (Met-1) is an N-acetylmethionine. 3 disordered regions span residues 1–64 (MGGW…GAFG), 85–118 (LTTVPAAPPPASTNRQSGRQPTPISPPLRDSHPQ), and 143–174 (PGGSSSGTVNPVPTTASPISSISSRTGDPAPN). Gly-2 carries the N-myristoyl glycine; by host lipid modification. The tract at residues 2 to 119 (GGWSSKPRQG…PPLRDSHPQA (118 aa)) is pre-S1. The segment at 2-174 (GGWSSKPRQG…SSRTGDPAPN (173 aa)) is pre-S. Over 2 to 181 (GGWSSKPRQG…APNMESTTSG (180 aa)) the chain is Virion surface; in external conformation. Residues 2 to 253 (GGWSSKPRQG…PGYRWMCLRR (252 aa)) lie on the Intravirion; in internal conformation side of the membrane. Residue Trp-4 is glycosylated (N-linked (GlcNAc...) asparagine). Polar residues predominate over residues 96 to 106 (STNRQSGRQPT). Residues 120 to 174 (MQWNSTTFHQVLLDPRVRGLYFPPGGSSSGTVNPVPTTASPISSISSRTGDPAPN) are pre-S2. Positions 155-166 (PTTASPISSISS) are enriched in low complexity. Residues 182–202 (FLGPLLVLQAGFFLLTRILTI) traverse the membrane as a helical segment. Topologically, residues 203–253 (PQSLDSWWTSLNFLGGAPTCPGQNSQSPTSNHSPTSCPPICPGYRWMCLRR) are intravirion; in external conformation. The helical transmembrane segment at 254–274 (FIIFLFILLLCLIFLLVLLDY) threads the bilayer. The Virion surface portion of the chain corresponds to 275–348 (QGMLPVCPLL…GASVRFSWLS (74 aa)). The N-linked (GlcNAc...) asparagine; by host glycan is linked to Asn-320. A helical transmembrane segment spans residues 349-369 (LLVPFVQWFVGLSPTVWLSVI). The Intravirion portion of the chain corresponds to 370-375 (WMMWYW). A helical membrane pass occupies residues 376–398 (GPSLYNILSPFLPLLPIFFCLWV). The Virion surface portion of the chain corresponds to 399-400 (YI).

It belongs to the orthohepadnavirus major surface antigen family. As to quaternary structure, in its internal form (Li-HBsAg), interacts with the capsid protein and with the isoform S. Interacts with host chaperone CANX. Associates with host chaperone CANX through its pre-S2 N glycan; this association may be essential for isoform M proper secretion. In terms of assembly, interacts with isoform L. Interacts with the antigens of satellite virus HDV (HDVAgs); this interaction is required for encapsidation of HDV genomic RNA. Post-translationally, isoform M is N-terminally acetylated by host at a ratio of 90%, and N-glycosylated by host at the pre-S2 region. In terms of processing, myristoylated.

It localises to the virion membrane. Functionally, the large envelope protein exists in two topological conformations, one which is termed 'external' or Le-HBsAg and the other 'internal' or Li-HBsAg. In its external conformation the protein attaches the virus to cell receptors and thereby initiating infection. This interaction determines the species specificity and liver tropism. This attachment induces virion internalization predominantly through caveolin-mediated endocytosis. The large envelope protein also assures fusion between virion membrane and endosomal membrane. In its internal conformation the protein plays a role in virion morphogenesis and mediates the contact with the nucleocapsid like a matrix protein. The middle envelope protein plays an important role in the budding of the virion. It is involved in the induction of budding in a nucleocapsid independent way. In this process the majority of envelope proteins bud to form subviral lipoprotein particles of 22 nm of diameter that do not contain a nucleocapsid. The sequence is that of Large envelope protein from Homo sapiens (Human).